The sequence spans 694 residues: Heat shock protein HSP 90-alpha (694 aa).

T5 and T7 each carry phosphothreonine; by PRKDC. Residues 9 to 236 (DQPMEEEEVE…DKEVSDDEAK (228 aa)) form an interaction with NR3C1 region. Position 51 (N51) interacts with ATP. N6-acetyllysine occurs at positions 58 and 84. 3 residues coordinate ATP: D93, K112, and F138. The span at 228–241 (KEVSDDEAKQPDDK) shows a compositional bias: basic and acidic residues. The segment at 228–275 (KEVSDDEAKQPDDKPEIEDVGSDEEEEEKKDGDIDQEELNKTKPIWTR) is disordered. A phosphoserine mark is found at S231 and S249. Residues 242–255 (PEIEDVGSDEEEEE) show a composition bias toward acidic residues. The segment covering 256 to 268 (KKDGDIDQEELNK) has biased composition (basic and acidic residues). The interval 258-578 (DGDIDQEELN…TANMERIMKA (321 aa)) is interaction with NR3C1. The segment at 261–582 (IDQEELNKTK…ERIMKAQALR (322 aa)) is interaction with FNIP2 and TSC1. Positions 261 to 694 (IDQEELNKTK…DDTSRMEEVD (434 aa)) are interaction with FLCN and FNIP1. Y289 bears the Phosphotyrosine mark. Residue R376 coordinates ATP. K419 bears the N6-acetyllysine mark. S429 carries the phosphoserine modification. K434 is modified (N6-acetyllysine). Residue S452 is modified to Phosphoserine. At K465 the chain carries N6-acetyllysine. Position 468 is a phosphotyrosine (Y468). K547 bears the N6-acetyllysine mark. C560 is subject to S-nitrosocysteine. The segment at 590 to 693 (MAAKKHLEVN…DDDTSRMEEV (104 aa)) is interaction with NR1D1. Position 603 is a phosphoserine (S603). The interval 644–694 (QTHANRIYRMIKLGLGIDEDDPTADDTAAAVTEEMPPLEGDDDTSRMEEVD) is required for homodimerization. A disordered region spans residues 662–694 (EDDPTADDTAAAVTEEMPPLEGDDDTSRMEEVD). The span at 668 to 677 (DDTAAAVTEE) shows a compositional bias: low complexity. Residues 685-694 (DDTSRMEEVD) carry the TPR repeat-binding motif. Positions 690–694 (MEEVD) are essential for interaction with SMYD3, TSC1 and STIP1/HOP. The tract at residues 691–694 (EEVD) is essential for interaction with SGTA and TTC1.

The protein belongs to the heat shock protein 90 family. Homodimer. Identified in NR3C1/GCR steroid receptor-chaperone complexes formed at least by NR3C1, HSP90AA1 and a variety of proteins containing TPR repeats such as FKBP4, FKBP5, PPID, PPP5C or STIP1. Forms a complex containing HSP90AA1, TSC1 and TSC2; TSC1 is required to recruit TCS2 to the complex. The closed form interacts (via the middle domain and TPR repeat-binding motif) with co-chaperone TSC1 (via C-terminus). Interacts with TOM34. Interacts with TERT; the interaction, together with PTGES3, is required for correct assembly and stabilization of the TERT holoenzyme complex. Interacts with CHORDC1 and DNAJC7. Interacts with STUB1 and UBE2N; may couple the chaperone and ubiquitination systems. Interacts (via TPR repeat-binding motif) with PPP5C (via TPR repeats); the interaction is direct and activates PPP5C phosphatase activity. Following LPS binding, may form a complex with CXCR4, GDF5 and HSPA8. Interacts with KSR1. Interacts with co-chaperone CDC37 (via C-terminus); the interaction inhibits HSP90AA1 ATPase activity. May interact with NWD1. Interacts with FNIP1 and FNIP2; the interaction inhibits HSP90AA1 ATPase activity. Interacts with co-chaperone AHSA1 (phosphorylated on 'Tyr-223'); the interaction activates HSP90AA1 ATPase activity and results in the dissociation of TSC1 from HSP90AA1. Interacts with FLCN in the presence of FNIP1. Interacts with HSP70, STIP1 and PTGES3. Interacts with SMYD3; this interaction enhances SMYD3 histone-lysine N-methyltransferase. Interacts with SGTA (via TPR repeats). Interacts with TTC1 (via TPR repeats). Interacts with HSF1 in an ATP-dependent manner. Interacts with MET; the interaction suppresses MET kinase activity. Interacts with ERBB2 in an ATP-dependent manner; the interaction suppresses ERBB2 kinase activity. Interacts with HIF1A, KEAP1 and RHOBTB2. Interacts with HSF1; this interaction is decreased in a IER5-dependent manner, promoting HSF1 accumulation in the nucleus, homotrimerization and DNA-binding activities. Interacts with STUB1 and SMAD3. Interacts with HSP90AB1; interaction is constitutive. Interacts with HECTD1 (via N-terminus). Interacts with NR3C1 (via domain NR LBD) and NR1D1 (via domain NR LBD). Interacts with NLPR12. Interacts with PDCL3. Interacts with TOMM70; the interaction is required for preprotein mitochondrial import. Interacts with TOMM70, IRF3 and TBK1; the interactions are direct and mediate the association of TOMM70 with IRF3 and TBK1. Forms a complex with ASL, ASS1 and NOS2; the complex regulates cell-autonomous L-arginine synthesis and citrulline recycling while channeling extracellular L-arginine to nitric oxide synthesis pathway. Post-translationally, ISGylated. S-nitrosylated; negatively regulates the ATPase activity and the activation of eNOS by HSP90AA1. In terms of processing, ubiquitinated via 'Lys-63'-linked polyubiquitination by HECTD1. Ubiquitination promotes translocation into the cytoplasm away from the membrane and secretory pathways.

It is found in the nucleus. The protein resides in the cytoplasm. The protein localises to the melanosome. It localises to the cell membrane. Its subcellular location is the mitochondrion. The catalysed reaction is ATP + H2O = ADP + phosphate + H(+). In the resting state, through the dimerization of its C-terminal domain, HSP90 forms a homodimer which is defined as the open conformation. Upon ATP-binding, the N-terminal domain undergoes significant conformational changes and comes in contact to form an active closed conformation. After HSP90 finishes its chaperoning tasks of assisting the proper folding, stabilization and activation of client proteins under the active state, ATP molecule is hydrolyzed to ADP which then dissociates from HSP90 and directs the protein back to the resting state. Co-chaperone TSC1 promotes ATP binding and inhibits HSP90AA1 ATPase activity. Binding to phosphorylated AHSA1 promotes HSP90AA1 ATPase activity. Inhibited by geldanamycin, Ganetespib (STA-9090) and SNX-2112. Its function is as follows. Molecular chaperone that promotes the maturation, structural maintenance and proper regulation of specific target proteins involved for instance in cell cycle control and signal transduction. Undergoes a functional cycle that is linked to its ATPase activity which is essential for its chaperone activity. This cycle probably induces conformational changes in the client proteins, thereby causing their activation. Interacts dynamically with various co-chaperones that modulate its substrate recognition, ATPase cycle and chaperone function. Engages with a range of client protein classes via its interaction with various co-chaperone proteins or complexes, that act as adapters, simultaneously able to interact with the specific client and the central chaperone itself. Recruitment of ATP and co-chaperone followed by client protein forms a functional chaperone. After the completion of the chaperoning process, properly folded client protein and co-chaperone leave HSP90 in an ADP-bound partially open conformation and finally, ADP is released from HSP90 which acquires an open conformation for the next cycle. Plays a critical role in mitochondrial import, delivers preproteins to the mitochondrial import receptor TOMM70. Apart from its chaperone activity, it also plays a role in the regulation of the transcription machinery. HSP90 and its co-chaperones modulate transcription at least at three different levels. In the first place, they alter the steady-state levels of certain transcription factors in response to various physiological cues. Second, they modulate the activity of certain epigenetic modifiers, such as histone deacetylases or DNA methyl transferases, and thereby respond to the change in the environment. Third, they participate in the eviction of histones from the promoter region of certain genes and thereby turn on gene expression. Binds bacterial lipopolysaccharide (LPS) and mediates LPS-induced inflammatory response, including TNF secretion by monocytes. Antagonizes STUB1-mediated inhibition of TGF-beta signaling via inhibition of STUB1-mediated SMAD3 ubiquitination and degradation. Mediates the association of TOMM70 with IRF3 or TBK1 in mitochondrial outer membrane which promotes host antiviral response. The protein is Heat shock protein HSP 90-alpha (HSP90AA1) of Oryctolagus cuniculus (Rabbit).